A 61-amino-acid polypeptide reads, in one-letter code: Small ribosomal subunit protein uS14 (61 aa).

Cysteine 24, cysteine 27, cysteine 40, and cysteine 43 together coordinate Zn(2+).

The protein belongs to the universal ribosomal protein uS14 family. Zinc-binding uS14 subfamily. Part of the 30S ribosomal subunit. Contacts proteins S3 and S10. Zn(2+) is required as a cofactor.

Binds 16S rRNA, required for the assembly of 30S particles and may also be responsible for determining the conformation of the 16S rRNA at the A site. The protein is Small ribosomal subunit protein uS14 of Maridesulfovibrio salexigens (strain ATCC 14822 / DSM 2638 / NCIMB 8403 / VKM B-1763) (Desulfovibrio salexigens).